Here is a 217-residue protein sequence, read N- to C-terminus: Uracil phosphoribosyltransferase (217 aa).

5-phospho-alpha-D-ribose 1-diphosphate contacts are provided by residues Arg-84, Arg-109, and 137-145 (DPMLATGGS). Uracil is bound by residues Ile-202 and 207–209 (GDA). Asp-208 lines the 5-phospho-alpha-D-ribose 1-diphosphate pocket.

Belongs to the UPRTase family. It depends on Mg(2+) as a cofactor.

The enzyme catalyses UMP + diphosphate = 5-phospho-alpha-D-ribose 1-diphosphate + uracil. It participates in pyrimidine metabolism; UMP biosynthesis via salvage pathway; UMP from uracil: step 1/1. With respect to regulation, allosterically activated by GTP. Functionally, catalyzes the conversion of uracil and 5-phospho-alpha-D-ribose 1-diphosphate (PRPP) to UMP and diphosphate. The protein is Uracil phosphoribosyltransferase of Synechococcus elongatus (strain ATCC 33912 / PCC 7942 / FACHB-805) (Anacystis nidulans R2).